The sequence spans 469 residues: DNA polymerase delta subunit 2 (469 aa).

The residue at position 1 (M1) is an N-acetylmethionine. At S257 the chain carries Phosphoserine.

The protein belongs to the DNA polymerase delta/II small subunit family. Component of both the DNA polymerase delta and DNA polymerase zeta complexes. Component of the tetrameric DNA polymerase delta complex (Pol-delta4), which consists of POLD1/p125, POLD2/p50, POLD3/p66/p68 and POLD4/p12, with POLD1 bearing DNA polymerase and 3' to 5' proofreading exonuclease activities. Within Pol-delta4, directly interacts with POLD1, POLD3 and POLD4. Following stress caused by DNA damaging agents or by replication stress, POLD4 is degraded and Pol-delta4 is converted into a trimeric form of the complex (Pol-delta3), which consists of POLD1, POLD2 and POLD3. Pol-delta3 is the major form occurring at S phase replication sites, as well as DNA damage sites. Also observed as a dimeric complex with POLD2 (Pol-delta2 complex). Pol-delta2 is relatively insensitive to the PCNA stimulation (2-5-fold) compared to Pol-delta4 that is stimulated by over 50-fold. Contrary to the other components of Pol-delta4, does not directly interact with PCNA. As POLD1 and POLD4, directly interacts with WRNIP1; this interaction stimulates DNA polymerase delta-mediated DNA synthesis, independently of the presence of PCNA. This stimulation may be due predominantly to an increase of initiation frequency and also to increased processivity. Directly interacts with POLDIP2 and POLDIP3. Directly interacts with KCTD13/PDIP1; in the presence of PCNA, this interaction may stimulate DNA polymerase activity. Component of the tetrameric Pol-zeta complex (Pol-zeta4), which consists of REV3L, MAD2L2, POLD2 and POLD3, with REV3L bearing DNA polymerase catalytic activity. Interacts with KCTD10.

The protein localises to the nucleus. Its function is as follows. Accessory component of both the DNA polymerase delta complex and the DNA polymerase zeta complex. As a component of the trimeric and tetrameric DNA polymerase delta complexes (Pol-delta3 and Pol-delta4, respectively), plays a role in high fidelity genome replication, including in lagging strand synthesis, and repair. Pol-delta3 and Pol-delta4 are characterized by the absence or the presence of POLD4. They exhibit differences in catalytic activity. Most notably, Pol-delta3 shows higher proofreading activity than Pol-delta4. Although both Pol-delta3 and Pol-delta4 process Okazaki fragments in vitro, Pol-delta3 may also be better suited to fulfill this task, exhibiting near-absence of strand displacement activity compared to Pol-delta4 and stalling on encounter with the 5'-blocking oligonucleotides. Pol-delta3 idling process may avoid the formation of a gap, while maintaining a nick that can be readily ligated. Along with DNA polymerase kappa, DNA polymerase delta carries out approximately half of nucleotide excision repair (NER) synthesis following UV irradiation. Under conditions of DNA replication stress, required for the repair of broken replication forks through break-induced replication (BIR). Involved in the translesion synthesis (TLS) of templates carrying O6-methylguanine or abasic sites performed by Pol-delta4, independently of DNA polymerase zeta (REV3L) or eta (POLH). Facilitates abasic site bypass by DNA polymerase delta by promoting extension from the nucleotide inserted opposite the lesion. Also involved in TLS as a component of the DNA polymerase zeta complex. Along with POLD3, dramatically increases the efficiency and processivity of DNA synthesis of the DNA polymerase zeta complex compared to the minimal zeta complex, consisting of only REV3L and REV7. In Mus musculus (Mouse), this protein is DNA polymerase delta subunit 2 (Pold2).